Reading from the N-terminus, the 83-residue chain is uncharacterized protein (83 aa).

Transmembrane regions (helical) follow at residues 23 to 43 and 49 to 69; these read GGCY…SAIA and SLWW…VVYG.

It is found in the cell membrane. This is an uncharacterized protein from Mycobacterium tuberculosis (strain CDC 1551 / Oshkosh).